We begin with the raw amino-acid sequence, 366 residues long: UDP-N-acetylglucosamine--N-acetylmuramyl-(pentapeptide) pyrophosphoryl-undecaprenol N-acetylglucosamine transferase (366 aa).

Residues 14-16, Asn-128, Arg-169, Ser-201, Ile-251, and Gln-296 each bind UDP-N-acetyl-alpha-D-glucosamine; that span reads TGG.

Belongs to the glycosyltransferase 28 family. MurG subfamily.

The protein resides in the cell inner membrane. The enzyme catalyses di-trans,octa-cis-undecaprenyl diphospho-N-acetyl-alpha-D-muramoyl-L-alanyl-D-glutamyl-meso-2,6-diaminopimeloyl-D-alanyl-D-alanine + UDP-N-acetyl-alpha-D-glucosamine = di-trans,octa-cis-undecaprenyl diphospho-[N-acetyl-alpha-D-glucosaminyl-(1-&gt;4)]-N-acetyl-alpha-D-muramoyl-L-alanyl-D-glutamyl-meso-2,6-diaminopimeloyl-D-alanyl-D-alanine + UDP + H(+). The protein operates within cell wall biogenesis; peptidoglycan biosynthesis. In terms of biological role, cell wall formation. Catalyzes the transfer of a GlcNAc subunit on undecaprenyl-pyrophosphoryl-MurNAc-pentapeptide (lipid intermediate I) to form undecaprenyl-pyrophosphoryl-MurNAc-(pentapeptide)GlcNAc (lipid intermediate II). The chain is UDP-N-acetylglucosamine--N-acetylmuramyl-(pentapeptide) pyrophosphoryl-undecaprenol N-acetylglucosamine transferase from Christiangramia forsetii (strain DSM 17595 / CGMCC 1.15422 / KT0803) (Gramella forsetii).